Reading from the N-terminus, the 1427-residue chain is DNA-directed RNA polymerase subunit beta' (1427 aa).

Positions 70, 72, 85, and 88 each coordinate Zn(2+). 3 residues coordinate Mg(2+): D461, D463, and D465. Zn(2+) is bound by residues C810, C884, C891, and C894. 2 disordered regions span residues 1044-1065 (QTDEATGMSSRVVTENRAAGRG) and 1394-1427 (PEAAIGDDPLATVEGETHGTDADAGDYLIEGDEA).

It belongs to the RNA polymerase beta' chain family. In terms of assembly, the RNAP catalytic core consists of 2 alpha, 1 beta, 1 beta' and 1 omega subunit. When a sigma factor is associated with the core the holoenzyme is formed, which can initiate transcription. Mg(2+) is required as a cofactor. It depends on Zn(2+) as a cofactor.

It catalyses the reaction RNA(n) + a ribonucleoside 5'-triphosphate = RNA(n+1) + diphosphate. In terms of biological role, DNA-dependent RNA polymerase catalyzes the transcription of DNA into RNA using the four ribonucleoside triphosphates as substrates. The protein is DNA-directed RNA polymerase subunit beta' of Novosphingobium aromaticivorans (strain ATCC 700278 / DSM 12444 / CCUG 56034 / CIP 105152 / NBRC 16084 / F199).